A 305-amino-acid chain; its full sequence is Spore coat protein CotA (305 aa).

Its subcellular location is the spore coat. The protein resides in the spore. It is found in the perispore. Functionally, contributes to maintain proper thickness of the spore coat. May contribute to the formation of polar appendages. May play an important role in assembly of the outer layers of the spore coat. The chain is Spore coat protein CotA from Clostridioides difficile (strain 630) (Peptoclostridium difficile).